A 285-amino-acid chain; its full sequence is Probable ribosomal RNA small subunit methyltransferase A (285 aa).

S-adenosyl-L-methionine is bound by residues His-29, Leu-31, Gly-58, Glu-79, Asp-107, and Asn-122.

The protein belongs to the class I-like SAM-binding methyltransferase superfamily. rRNA adenine N(6)-methyltransferase family. RsmA subfamily.

It localises to the cytoplasm. Its function is as follows. Specifically dimethylates two adjacent adenosines in the loop of a conserved hairpin near the 3'-end of 16S rRNA in the 30S particle. May play a critical role in biogenesis of 30S subunits. The protein is Probable ribosomal RNA small subunit methyltransferase A of Haloarcula marismortui (strain ATCC 43049 / DSM 3752 / JCM 8966 / VKM B-1809) (Halobacterium marismortui).